Reading from the N-terminus, the 247-residue chain is Small ribosomal subunit protein uS2 (247 aa).

This sequence belongs to the universal ribosomal protein uS2 family.

In Ralstonia pickettii (strain 12J), this protein is Small ribosomal subunit protein uS2.